Reading from the N-terminus, the 306-residue chain is Enoyl-CoA isomerase/hydratase MYCGRDRAFT_76805 (306 aa).

Residues 103 to 107 (AGADL) and G150 contribute to the substrate site.

The protein belongs to the enoyl-CoA hydratase/isomerase family.

The enzyme catalyses a (3S)-3-hydroxyacyl-CoA = a (2E)-enoyl-CoA + H2O. It carries out the reaction a 4-saturated-(3S)-3-hydroxyacyl-CoA = a (3E)-enoyl-CoA + H2O. It functions in the pathway siderophore biosynthesis. Enoyl-CoA isomerase/hydratase involved in the biosynthesis of a ferrichrome A-like siderophore which may contribute to organismal virulence. The first step of siderophore biosynthesis is performed by the HMG-CoA synthase (HMGS) MYCGRDRAFT_54740 which catalyzes the generation of HMG-CoA and CoA using acetoacetyl-CoA and acetyl-CoA as substrates. The enoyl-CoA isomerase/hydratase MYCGRDRAFT_76805 then catalyzes the conversion of HMG-CoA to methylglutaconyl-CoA. The acyltransferase MYCGRDRAFT_85486 then fuses methylglutaconyl-CoA with hydroxyornithine to yield methylglutaconyl hydroxyornithine. Methylglutaconyl hydroxyornithine is then available for use by the nonribosomal peptide synthetase NRPS2 to generate the ferrichrome A-like siderophore. The chain is Enoyl-CoA isomerase/hydratase MYCGRDRAFT_76805 from Zymoseptoria tritici (strain CBS 115943 / IPO323) (Speckled leaf blotch fungus).